The following is a 723-amino-acid chain: MEHKPTHTSGQCPVMHGGATSSNSSNVAWWPKALNLDILHQHDRKSNPMGADFSYREELKKLDVEALKRDLKTLMTDSQDWWPADWGHYGGLMIRMAWHSAGSYRVGDGRGGADTGNQRFAPLNSWPDNANLDKARRLLWPIKQKYGNKISWADLMILAGNMAYESMGLKTFGFAFGREDIWHPEKDIYWGAEQEWLAPSGAENSRYSGERDLENPLAAVMMGLIYVNPEGVDGNPDPLKTAKDMRVTFARMGMNDEETVALTAGGHTVGKAHGNGNAANLGADPESADLEEQGLGWNNHKSRGIGRDTVTSGIEGAWTTNPTQWDNGFFHLLFSYDWWLQKSPAGAWQWEPVNIKEEDKPVDVEDPTIRHNPIMTDADMALKLDPEYRKISERFHKDPAYFSETFARAWFKLTHRDMGPKARYFGPDVPAETLIWQDPVPTGRKDYDVDAVKAKIIASGLSIGEMVSTAWDSARTFRNSDKRGGANGARIRLAPQKDWLGNEPEKLAKVLNVLEAIASEFNISVADTIVLAGNVGVEQAAKAAGIAITVPFAAGRGDATIEQTDVESFDVLEPIADGFRNWQKQHYAVNPEELLLDRAQLLGLSAPEMTVLIGGLRVLGTNHGGTKHGVFTDNVGALSNDFFVNLTDMRYTWKPTGRNSYDIVERNSGNVKWTATRVDLVFGSNSILRAYAEVYAQDDNKEKFVKDFVAAWTKVMNADRFDI.

The tryptophyl-tyrosyl-methioninium (Trp-Tyr) (with M-252) cross-link spans 98 to 226 (WHSAGSYRVG…LAAVMMGLIY (129 aa)). Residue His99 is the Proton acceptor of the active site. Residues 226–252 (YVNPEGVDGNPDPLKTAKDMRVTFARM) constitute a cross-link (tryptophyl-tyrosyl-methioninium (Tyr-Met) (with W-98)). Residue His267 coordinates heme b.

It belongs to the peroxidase family. Peroxidase/catalase subfamily. As to quaternary structure, homodimer or homotetramer. Heme b is required as a cofactor. Formation of the three residue Trp-Tyr-Met cross-link is important for the catalase, but not the peroxidase activity of the enzyme.

The enzyme catalyses H2O2 + AH2 = A + 2 H2O. It catalyses the reaction 2 H2O2 = O2 + 2 H2O. Functionally, bifunctional enzyme with both catalase and broad-spectrum peroxidase activity. The protein is Catalase-peroxidase of Vibrio vulnificus (strain CMCP6).